A 152-amino-acid chain; its full sequence is Transcriptional regulator MraZ (152 aa).

SpoVT-AbrB domains are found at residues 5 to 52 (ASAI…PIHE) and 81 to 124 (AHEV…DEQS).

It belongs to the MraZ family. In terms of assembly, forms oligomers.

Its subcellular location is the cytoplasm. It is found in the nucleoid. The polypeptide is Transcriptional regulator MraZ (Shewanella baltica (strain OS223)).